The following is a 254-amino-acid chain: Mediator of RNA polymerase II transcription subunit 4 (254 aa).

The stretch at 72-114 forms a coiled coil; the sequence is RVHQEMQSLEKEVEKRDSDIQQLQKQLKEAEHILATAVYQAKE. Positions 215-254 are disordered; that stretch reads ILPPHHGNDFGLEPPGHNKENEDDVEAMSTDSSSSSSDSD. The span at 243–254 shows a compositional bias: low complexity; that stretch reads STDSSSSSSDSD.

Belongs to the Mediator complex subunit 4 family. Component of the Mediator complex.

Its subcellular location is the nucleus. In terms of biological role, component of the Mediator complex, a coactivator involved in the regulated transcription of nearly all RNA polymerase II-dependent genes. Mediator functions as a bridge to convey information from gene-specific regulatory proteins to the basal RNA polymerase II transcription machinery. Mediator is recruited to promoters by direct interactions with regulatory proteins and serves as a scaffold for the assembly of a functional preinitiation complex with RNA polymerase II and the general transcription factors. The sequence is that of Mediator of RNA polymerase II transcription subunit 4 (med4) from Danio rerio (Zebrafish).